Here is a 135-residue protein sequence, read N- to C-terminus: Transcription antitermination protein NusB (135 aa).

The protein belongs to the NusB family.

In terms of biological role, involved in transcription antitermination. Required for transcription of ribosomal RNA (rRNA) genes. Binds specifically to the boxA antiterminator sequence of the ribosomal RNA (rrn) operons. This Clostridium perfringens (strain ATCC 13124 / DSM 756 / JCM 1290 / NCIMB 6125 / NCTC 8237 / Type A) protein is Transcription antitermination protein NusB.